Reading from the N-terminus, the 208-residue chain is Small ribosomal subunit protein uS4 (208 aa).

The interval 31 to 50 (SALDKRAYGPGQHGQRRTKT) is disordered. The 64-residue stretch at 98-161 (RRLDNVVYRM…KSNPQVVRAM (64 aa)) folds into the S4 RNA-binding domain.

This sequence belongs to the universal ribosomal protein uS4 family. Part of the 30S ribosomal subunit. Contacts protein S5. The interaction surface between S4 and S5 is involved in control of translational fidelity.

Functionally, one of the primary rRNA binding proteins, it binds directly to 16S rRNA where it nucleates assembly of the body of the 30S subunit. In terms of biological role, with S5 and S12 plays an important role in translational accuracy. The protein is Small ribosomal subunit protein uS4 of Helicobacter pylori (strain J99 / ATCC 700824) (Campylobacter pylori J99).